The primary structure comprises 160 residues: Small ribosomal subunit protein bS6 (160 aa).

Composition is skewed to basic and acidic residues over residues 94–119 (EEHEEGPSAMMRKADRDRERDDRGGR) and 125–152 (RGDREGRGDREGGGFRGDRGPRRPREDA). The interval 94-160 (EEHEEGPSAM…DADTAAASEE (67 aa)) is disordered.

It belongs to the bacterial ribosomal protein bS6 family.

Functionally, binds together with bS18 to 16S ribosomal RNA. The protein is Small ribosomal subunit protein bS6 of Rhodopseudomonas palustris (strain BisB5).